The sequence spans 126 residues: SPbeta prophage-derived uncharacterized protein YorC (126 aa).

This chain is SPbeta prophage-derived uncharacterized protein YorC (yorC), found in Bacillus subtilis (strain 168).